A 919-amino-acid chain; its full sequence is Transcriptional regulatory protein EDS1 (919 aa).

Residues 1–54 (MSHHVPNLYGTPIRDPHERKRNSASMGEVNQSVSSRNCERGSEKGTKQRKKASR) are disordered. Over residues 23–36 (SASMGEVNQSVSSR) the composition is skewed to polar residues. A compositionally biased stretch (basic and acidic residues) spans 37 to 46 (NCERGSEKGT). Positions 56–85 (CDQCRRKRIKCRFDKHTGVCQGCLEVGEKC) form a DNA-binding region, zn(2)-C6 fungal-type. Positions 297-338 (AGCPNKKLGTDGRSDKWDKNSTWKPVYRSSNPSHPSTEKNVS) are disordered. Over residues 304–317 (LGTDGRSDKWDKNS) the composition is skewed to basic and acidic residues. Residues 318–338 (TWKPVYRSSNPSHPSTEKNVS) show a composition bias toward polar residues.

In terms of assembly, binds DNA in a sequence-specific manner.

It is found in the nucleus. This Saccharomyces cerevisiae (strain RM11-1a) (Baker's yeast) protein is Transcriptional regulatory protein EDS1 (EDS1).